The following is a 1522-amino-acid chain: Rho guanine nucleotide exchange factor 11 (1522 aa).

The tract at residues 1–40 (MSVRLPQSIDRLSSLSSLGDSAPERKSPSHHRQPSDASET) is disordered. Residues serine 2, serine 14, serine 16, and serine 35 each carry the phosphoserine modification. Residues 47–126 (CVIIQKDQHG…LTLLGSSPSS (80 aa)) form the PDZ domain. Disordered stretches follow at residues 128-175 (GISG…PEVQ) and 200-231 (YGDT…ERFP). Residues 149–161 (PSPPPPPPLPPPQ) show a composition bias toward pro residues. Serine 245 and serine 251 each carry phosphoserine. Position 254 is a phosphothreonine (threonine 254). 2 positions are modified to phosphoserine: serine 255 and serine 271. Residues 263–286 (AQHHRRQGSDAAVPSTGDQGVDQS) form a disordered region. The region spanning 306–486 (ESDIIFQDLE…NTYMSHAGIR (181 aa)) is the RGSL domain. A coiled-coil region spans residues 444–470 (LRERQVAEKQLAALGDILSKYEEDRSA). The segment at 490–555 (ARPSNTAEKA…SSQSTFHIPL (66 aa)) is disordered. The segment covering 521–533 (SKKEKDALEDKKR) has biased composition (basic and acidic residues). Serine 556, serine 635, and serine 663 each carry phosphoserine. Positions 573-680 (ENNQQYDAPE…FTPKMGRRSI (108 aa)) are disordered. Over residues 601–637 (DSSRSEIRLGRSESLKGREEMKRSRKAENVPRSRSDV) the composition is skewed to basic and acidic residues. Residues 651–664 (SASSSTSSLSTRSL) are compositionally biased toward low complexity. 2 positions are modified to phosphothreonine: threonine 668 and threonine 672. A DH domain is found at 734–923 (DRQEVINELF…REILKYVNEA (190 aa)). The PH domain occupies 965–1079 (KMIHEGPLTW…WMELLEEAVR (115 aa)). The segment at 1084–1141 (HPGAAPMPVHPPPPGPREPAQQGPTPSRVELDDSDVFHGEPEPEELPGGTGSQQRVQG) is disordered. The segment covering 1091-1100 (PVHPPPPGPR) has biased composition (pro residues). Residues 1112 to 1124 (VELDDSDVFHGEP) show a composition bias toward basic and acidic residues. The residue at position 1155 (serine 1155) is a Phosphoserine. Disordered stretches follow at residues 1223-1320 (ETQA…AGGY), 1332-1423 (KVVP…RDVG), and 1453-1522 (LGGE…SPGP). Positions 1236–1245 (PTPSVISVTS) are enriched in polar residues. Residues serine 1295 and serine 1300 each carry the phosphoserine modification. A compositionally biased stretch (low complexity) spans 1338-1353 (PESGQSEPGPPEVEGG). A phosphoserine mark is found at serine 1457 and serine 1458. A phosphothreonine mark is found at threonine 1462 and threonine 1475. Serine 1480 is modified (phosphoserine). Residues 1503-1513 (DGSDAPLEDST) show a composition bias toward acidic residues.

Interacts with GNA12 and GNA13 through the RGS domain. Interacts with RHOA, PLXNB1 and PLXNB2. Interacts with SLC1A6. Interacts (via DH domain) with GCSAM (via C-terminus). Found in a complex with ARHGEF11 and ARHGEF12; binding to ARHGEF11 and ARHGEF12 enhances CDC42 GEF activity of PLEKHG4B, and PLEKHG4B, in turn, inhibits ARHGEF11- and ARHGEF12-mediated RHOA activation. Phosphorylated by MAP kinase p38 (MAPK11, MAPK12, MAPK13 and/or MAPK14). In terms of processing, ubiquitinated by the BCR(KLHL20) E3 ubiquitin ligase complex when previously phosphorylated by MAP kinase p38 (MAPK11, MAPK12, MAPK13 and/or MAPK14), leading to its degradation, thereby restricting RhoA activity and facilitating growth cone spreading and neurite outgrowth. As to expression, ubiquitously expressed.

It localises to the cytoplasm. It is found in the membrane. Functionally, may play a role in the regulation of RhoA GTPase by guanine nucleotide-binding alpha-12 (GNA12) and alpha-13 (GNA13). Acts as guanine nucleotide exchange factor (GEF) for RhoA GTPase and may act as GTPase-activating protein (GAP) for GNA12 and GNA13. Involved in neurotrophin-induced neurite outgrowth. The chain is Rho guanine nucleotide exchange factor 11 (ARHGEF11) from Homo sapiens (Human).